We begin with the raw amino-acid sequence, 512 residues long: Cytokinin hydroxylase (512 aa).

A helical membrane pass occupies residues 2-22 (MVTLVLKYVLVIVMTLILRVL). Position 458 (cysteine 458) interacts with heme.

It belongs to the cytochrome P450 family. Heme is required as a cofactor. In terms of tissue distribution, specifically expressed in roots.

It is found in the membrane. It carries out the reaction N(6)-(dimethylallyl)adenosine 5'-phosphate + NADPH + O2 + H(+) = 9-ribosyl-trans-zeatin 5'-phosphate + NADP(+) + H2O. The catalysed reaction is N(6)-(dimethylallyl)adenosine 5'-diphosphate + NADPH + O2 + H(+) = 9-ribosyl-trans-zeatin 5'-diphosphate + NADP(+) + H2O. The enzyme catalyses N(6)-(dimethylallyl)adenosine 5'-triphosphate + NADPH + O2 + H(+) = 9-ribosyl-trans-zeatin 5'-triphosphate + NADP(+) + H2O. In terms of biological role, cytokinin hydroxylase that catalyzes the biosynthesis of trans-zeatin via the isopentenyladenine riboside 5'-monophosphate (iPRMP)-dependent pathway. Can use isopentenyladenosine-5'-monophosphate, isopentenyladenosine-5'-diphosphate and isopentenyladenosine-5'-triphosphate as substrate. This chain is Cytokinin hydroxylase (CYP735A2), found in Arabidopsis thaliana (Mouse-ear cress).